A 184-amino-acid polypeptide reads, in one-letter code: Photosystem I assembly protein Ycf4 (184 aa).

A run of 2 helical transmembrane segments spans residues 22-42 (FCWAIILFLGSLGFLLIGISS) and 57-77 (IIFFPQGLVMSFYGLAGLFIS).

This sequence belongs to the Ycf4 family.

It is found in the plastid. The protein resides in the chloroplast thylakoid membrane. Its function is as follows. Seems to be required for the assembly of the photosystem I complex. The protein is Photosystem I assembly protein Ycf4 of Populus alba (White poplar).